Consider the following 498-residue polypeptide: Protein translocase subunit SecY (498 aa).

Helical transmembrane passes span 23 to 43 (FVIS…ISVI), 65 to 87 (FDLF…VGIS), 124 to 144 (ITRF…IALI), 163 to 183 (AFYI…GDII), 191 to 211 (GITL…FIVM), 229 to 249 (AINF…ISFV), 281 to 301 (AAGV…ITIA), 322 to 342 (PVGI…YSYI), 382 to 402 (FIGA…SLVL), and 406 to 426 (TTLS…MELY). A compositionally biased stretch (basic and acidic residues) spans 478-488 (VEPTQDKKKNP). The interval 478–498 (VEPTQDKKKNPSDPLEVSQLW) is disordered.

It belongs to the SecY/SEC61-alpha family. In terms of assembly, component of the Sec protein translocase complex. Heterotrimer consisting of SecY, SecE and SecG subunits. The heterotrimers can form oligomers, although 1 heterotrimer is thought to be able to translocate proteins. Interacts with the ribosome. Interacts with SecDF, and other proteins may be involved. Interacts with SecA.

Its subcellular location is the cell membrane. In terms of biological role, the central subunit of the protein translocation channel SecYEG. Consists of two halves formed by TMs 1-5 and 6-10. These two domains form a lateral gate at the front which open onto the bilayer between TMs 2 and 7, and are clamped together by SecE at the back. The channel is closed by both a pore ring composed of hydrophobic SecY resides and a short helix (helix 2A) on the extracellular side of the membrane which forms a plug. The plug probably moves laterally to allow the channel to open. The ring and the pore may move independently. The protein is Protein translocase subunit SecY of Mycoplasmoides gallisepticum (strain R(low / passage 15 / clone 2)) (Mycoplasma gallisepticum).